Here is a 901-residue protein sequence, read N- to C-terminus: Glutamate receptor 2.1 (901 aa).

The first 25 residues, 1 to 25 (MKRENNLVLSLLFFVIVFLMQVGEA), serve as a signal peptide directing secretion. Residues 26 to 574 (QNRITNVNVG…SSTIFLMPLT (549 aa)) are Extracellular-facing. N-linked (GlcNAc...) asparagine glycosylation is found at N46, N53, N204, N267, N331, N342, N461, N477, and N536. The chain crosses the membrane as a helical span at residues 575–595 (LALWLISLLSFFIIGLVVWVL). Topologically, residues 596–604 (EHRVNPDFD) are cytoplasmic. Residues 605-625 (GPGQYQLSTIFWFSFSIMVFA) form a helical membrane-spanning segment. At 626–629 (PRER) the chain is on the cytoplasmic side. The chain crosses the membrane as a helical span at residues 630 to 650 (VLSFWARVVVIIWYFLVLVLT). The Extracellular segment spans residues 651–823 (QSYTASLASL…VSFRQLGFDS (173 aa)). The helical transmembrane segment at 824-844 (FWVLFLVAAIVCTMALLKFVY) threads the bilayer. The Cytoplasmic segment spans residues 845–901 (QFLKENPNQRNLRVLWEKFNEPDQKSYIKDVTKCQCSSGQGMPKNGQEGANAVNNGN).

This sequence belongs to the glutamate-gated ion channel (TC 1.A.10.1) family. In terms of assembly, may form heteromers. As to expression, expressed predominantly in roots. First strongly detected in all cell types of the root except at the apex. Later expressed at the root-shoot junction.

Its subcellular location is the membrane. Its function is as follows. Glutamate-gated receptor that probably acts as a non-selective cation channel. May be involved in light-signal transduction and calcium homeostasis via the regulation of calcium influx into cells. The polypeptide is Glutamate receptor 2.1 (GLR2.1) (Arabidopsis thaliana (Mouse-ear cress)).